We begin with the raw amino-acid sequence, 87 residues long: Mu-conotoxin cal12b (87 aa).

An N-terminal signal peptide occupies residues 1–19 (MKLTCVLVVLLLLLPYGDL). A propeptide spanning residues 20 to 42 (ITNNYIRGAARKVTPWRRNLKTR) is cleaved from the precursor. Intrachain disulfides connect Cys45–Cys58, Cys53–Cys70, Cys60–Cys75, and Cys69–Cys81. Position 59 is a 6'-bromotryptophan (Trp59). 4-hydroxyproline is present on Pro65. A 6'-bromotryptophan mark is found at Trp79 and Trp80. At Pro82 the chain carries 4-hydroxyproline. 6'-bromotryptophan is present on Trp86.

In terms of tissue distribution, expressed by the venom duct.

Its subcellular location is the secreted. In terms of biological role, mu-conotoxins block voltage-gated sodium channels. This toxin reversibly blocks voltage-gated sodium channel in cephalopods (tested on squid giant-fiber-lobe neurons) with an inhibitor constant (Ki) of 15 nmol/l, with no alteration in the voltage dependence of sodium conductance or on the kinetics of inactivation. Has no effect on sodium channels of the two gastropod S.luhuanus and A.californica (which are not natural prey). This Californiconus californicus (California cone) protein is Mu-conotoxin cal12b.